A 417-amino-acid chain; its full sequence is BSD domain-containing protein 1-B (417 aa).

Residues 153-205 (WLAYWDPEQRKAEISEPLVTSPSIRALFTKMVPAAVSHSEFWQRYFYKVHQLE) form the BSD domain. Disordered stretches follow at residues 215-234 (KQRA…EEEE), 262-292 (HVED…SISP), and 323-390 (AAET…DFDM). A compositionally biased stretch (basic and acidic residues) spans 262–278 (HVEDKSEKTAELNRDHT). Over residues 281–292 (TSPSESSESISP) the composition is skewed to low complexity. Polar residues predominate over residues 332 to 343 (PVEQTGKSNAQM). The span at 345–356 (THREDPPSDLRV) shows a compositional bias: basic and acidic residues. Residues 360–379 (NSDSGKSTPSNNGQKGSSTD) show a composition bias toward polar residues. Residues 380 to 390 (VSEDWEKDFDM) show a composition bias toward acidic residues.

In Xenopus laevis (African clawed frog), this protein is BSD domain-containing protein 1-B (bsdc1-b).